Reading from the N-terminus, the 455-residue chain is MEWDLKMPPAASWELADELENSGGGGVPAAVSSSSAAVGGGVNAGGGGRQECSVDLKLGGLGEFGGGGAQPRVAVAGEPAKGKGPAAAATGAAAAASSAPAKRPRGAAAAGQQQCPSCAVDGCKEDLSKCRDYHRRHKVCEAHSKTPLVVVSGREMRFCQQCSRFHLLQEFDEAKRSCRKRLDGHNRRRRKPQPDPMNSASYLASQQGARFSPFATPRPEASWTGMIKTEESPYYTHHQIPLGISSRQQHFVGSTSDGGRRFPFLQEGEISFGTGAGAGGVPMDQAAAAAAASVCQPLLKTVAPPPPPHGGGGSGGGKMFSDGGLTQVLDSDCALSLLSAPANSTAIDVGGGRVVVQPTEHIPMAQPLISGLQFGGGGGSSAWFAARPHHQAATGAAATAVVVSTAGFSCPVVESEQLNTVLSSNDNEMNYNGMFHVGGEGSSDGTSSSLPFSWQ.

The segment at 115–192 adopts an SBP-type zinc-finger fold; the sequence is CPSCAVDGCK…DGHNRRRRKP (78 aa). Residues C118, C123, C140, H143, C159, C162, H166, and C178 each contribute to the Zn(2+) site. The Bipartite nuclear localization signal signature appears at 175–191; the sequence is KRSCRKRLDGHNRRRRK. The segment at 182 to 204 is disordered; sequence LDGHNRRRRKPQPDPMNSASYLA.

Expressed in young panicles.

It is found in the nucleus. In terms of biological role, trans-acting factor that binds specifically to the consensus nucleotide sequence 5'-TNCGTACAA-3'. May be involved in panicle development. The protein is Squamosa promoter-binding-like protein 16 (SPL16) of Oryza sativa subsp. japonica (Rice).